Consider the following 341-residue polypeptide: UDP-3-O-acylglucosamine N-acyltransferase (341 aa).

His242 serves as the catalytic Proton acceptor.

The protein belongs to the transferase hexapeptide repeat family. LpxD subfamily. Homotrimer.

It carries out the reaction a UDP-3-O-[(3R)-3-hydroxyacyl]-alpha-D-glucosamine + a (3R)-hydroxyacyl-[ACP] = a UDP-2-N,3-O-bis[(3R)-3-hydroxyacyl]-alpha-D-glucosamine + holo-[ACP] + H(+). It participates in bacterial outer membrane biogenesis; LPS lipid A biosynthesis. Functionally, catalyzes the N-acylation of UDP-3-O-acylglucosamine using 3-hydroxyacyl-ACP as the acyl donor. Is involved in the biosynthesis of lipid A, a phosphorylated glycolipid that anchors the lipopolysaccharide to the outer membrane of the cell. The sequence is that of UDP-3-O-acylglucosamine N-acyltransferase from Haemophilus influenzae (strain 86-028NP).